A 193-amino-acid polypeptide reads, in one-letter code: Probable DNA-directed RNA polymerase subunit delta (193 aa).

An HTH HARE-type domain is found at 14–81 (LALVEIATAI…GNNEWGLRAW (68 aa)). Acidic residues-rich tracts occupy residues 119 to 174 (DDDV…DDNL) and 182 to 193 (DLDDLSDGDIEK). Residues 119–193 (DDDVIDYNDD…DDLSDGDIEK (75 aa)) form a disordered region.

The protein belongs to the RpoE family. RNAP is composed of a core of 2 alpha, a beta and a beta' subunits. The core is associated with a delta subunit and one of several sigma factors.

Functionally, participates in both the initiation and recycling phases of transcription. In the presence of the delta subunit, RNAP displays an increased specificity of transcription, a decreased affinity for nucleic acids, and an increased efficiency of RNA synthesis because of enhanced recycling. The polypeptide is Probable DNA-directed RNA polymerase subunit delta (Leuconostoc citreum (strain KM20)).